Here is a 524-residue protein sequence, read N- to C-terminus: Thermosome subunit 3 (524 aa).

Belongs to the TCP-1 chaperonin family. The thermosome or CCT complex is a oligomeric complex of two octameric double-ring structures; the complex is probably a heterooligomer of CCT1, CCT2 and CCT3 with yet unknown stoichiometry.

Functionally, molecular chaperone that assists in the folding or refolding of nascent or denatured proteins along with ATP hydrolysis. ATPase activity is highest in thermosome assemblies containing CCT1:CCT2, followed by assemblies containing CCT1:CCT2:CCT3. Not required for thermosome ATPase activity. Not required for growth. This chain is Thermosome subunit 3 (cct3), found in Haloferax volcanii (strain ATCC 29605 / DSM 3757 / JCM 8879 / NBRC 14742 / NCIMB 2012 / VKM B-1768 / DS2) (Halobacterium volcanii).